The sequence spans 384 residues: 3,7-dimethylxanthine N-methyltransferase 2 (384 aa).

Residues Tyr18, Cys61, Asn66, Asp100, Leu101, Ser139, Phe140, and Cys156 each coordinate S-adenosyl-L-homocysteine. Residue Tyr157 coordinates theobromine. Cys158 is a binding site for S-adenosyl-L-homocysteine. Residues His160 and Trp161 each contribute to the theobromine site. Asn178 provides a ligand contact to Mg(2+). Ser237 lines the theobromine pocket. Asp260, Phe262, and Asn263 together coordinate Mg(2+). Theobromine is bound at residue Tyr368.

Belongs to the methyltransferase superfamily. Type-7 methyltransferase family. The cofactor is Mg(2+). Highly expressed in developing endosperm. Detected in young leaves and flower buds. Present in immature fruits (grains), but barely in mature fruits.

It carries out the reaction 7-methylxanthine + S-adenosyl-L-methionine = theobromine + S-adenosyl-L-homocysteine + H(+). The catalysed reaction is theobromine + S-adenosyl-L-methionine = caffeine + S-adenosyl-L-homocysteine + H(+). The enzyme catalyses 1,7-dimethylxanthine + S-adenosyl-L-methionine = caffeine + S-adenosyl-L-homocysteine + H(+). It functions in the pathway alkaloid biosynthesis. Functionally, involved in the biosynthesis of caffeine. Catalyzes the conversion of 7-methylxanthine (7mX) to theobromine and of theobromine to caffeine. Has 1-N-methylation activity. In Coffea arabica (Arabian coffee), this protein is 3,7-dimethylxanthine N-methyltransferase 2.